The sequence spans 298 residues: Lipoyl synthase (298 aa).

[4Fe-4S] cluster-binding residues include Cys43, Cys48, Cys54, Cys69, Cys73, Cys76, and Ser280. The Radical SAM core domain maps to 55–269; the sequence is FSSGTATFLI…AACGRGMGIP (215 aa).

It belongs to the radical SAM superfamily. Lipoyl synthase family. Requires [4Fe-4S] cluster as cofactor.

The protein localises to the cytoplasm. It catalyses the reaction [[Fe-S] cluster scaffold protein carrying a second [4Fe-4S](2+) cluster] + N(6)-octanoyl-L-lysyl-[protein] + 2 oxidized [2Fe-2S]-[ferredoxin] + 2 S-adenosyl-L-methionine + 4 H(+) = [[Fe-S] cluster scaffold protein] + N(6)-[(R)-dihydrolipoyl]-L-lysyl-[protein] + 4 Fe(3+) + 2 hydrogen sulfide + 2 5'-deoxyadenosine + 2 L-methionine + 2 reduced [2Fe-2S]-[ferredoxin]. The protein operates within protein modification; protein lipoylation via endogenous pathway; protein N(6)-(lipoyl)lysine from octanoyl-[acyl-carrier-protein]: step 2/2. In terms of biological role, catalyzes the radical-mediated insertion of two sulfur atoms into the C-6 and C-8 positions of the octanoyl moiety bound to the lipoyl domains of lipoate-dependent enzymes, thereby converting the octanoylated domains into lipoylated derivatives. This is Lipoyl synthase from Nitratidesulfovibrio vulgaris (strain DP4) (Desulfovibrio vulgaris).